A 301-amino-acid chain; its full sequence is Triplex capsid protein 2 (301 aa).

Belongs to the herpesviridae TRX2 protein family. In terms of assembly, interacts with TRX1 and major capisd protein/MCP.

The protein resides in the virion. It is found in the host nucleus. Functionally, structural component of the T=16 icosahedral capsid. The capsid is composed of pentamers and hexamers of major capsid protein/MCP, which are linked together by heterotrimers called triplexes. These triplexes are formed by a single molecule of triplex protein 1/TRX1 and two copies of triplex protein 2/TRX2. Additionally, TRX1 is required for efficient transport of TRX2 to the nucleus, which is the site of capsid assembly. This is Triplex capsid protein 2 from Homo sapiens (Human).